A 69-amino-acid polypeptide reads, in one-letter code: Sperm protamine P1 (69 aa).

The disordered stretch occupies residues 1–69; that stretch reads MASYRNSRSR…RKRNNNTENK (69 aa). Basic residues-rich tracts occupy residues 7 to 25 and 34 to 63; these read SRSR…RSRV and RSSR…RKRN.

Belongs to the protamine P1 family. In terms of tissue distribution, testis.

The protein resides in the nucleus. Its subcellular location is the chromosome. Its function is as follows. Protamines substitute for histones in the chromatin of sperm during the haploid phase of spermatogenesis. They compact sperm DNA into a highly condensed, stable and inactive complex. This Perameles gunnii (Eastern barred bandicoot) protein is Sperm protamine P1 (PRM1).